We begin with the raw amino-acid sequence, 211 residues long: 5-formyltetrahydrofolate cyclo-ligase (211 aa).

Position 4 to 8 (4 to 8 (KQLLR)) interacts with ATP. Substrate-binding positions include Glu56 and 152–156 (HGAGY). ATP is bound by residues 151 to 158 (GHGAGYYD) and Asp194.

It belongs to the 5-formyltetrahydrofolate cyclo-ligase family. In terms of processing, N-glycosylated.

It is found in the mitochondrion. The enzyme catalyses (6S)-5-formyl-5,6,7,8-tetrahydrofolate + ATP = (6R)-5,10-methenyltetrahydrofolate + ADP + phosphate. In terms of biological role, only enzyme known to utilize 5-formyltetrahydrofolate (folinic acid) as substrate. Contributes to tetrahydrofolate metabolism in an alternative way of folate biosynthesis. May regulate carbon flow through the folate-dependent one-carbon metabolic network that supplies carbon for the biosynthesis of purines, thymidine and amino acids. The protein is 5-formyltetrahydrofolate cyclo-ligase (FAU1) of Saccharomyces cerevisiae (strain ATCC 204508 / S288c) (Baker's yeast).